The chain runs to 875 residues: uncharacterized protein (875 aa).

The disordered stretch occupies residues 83 to 149; that stretch reads PFQPPPPQPF…QPPQPPPQQL (67 aa). The segment covering 101–147 has biased composition (pro residues); it reads QQPPQPPPDQPQQPQPPQQPPQQPPQQQPQPPQPPQQPPQPPQPPPQ.

This is an uncharacterized protein from Orgyia pseudotsugata multicapsid polyhedrosis virus (OpMNPV).